We begin with the raw amino-acid sequence, 161 residues long: 3-hydroxyacyl-[acyl-carrier-protein] dehydratase FabZ (161 aa).

Residue H55 is part of the active site.

This sequence belongs to the thioester dehydratase family. FabZ subfamily.

The protein localises to the cytoplasm. The catalysed reaction is a (3R)-hydroxyacyl-[ACP] = a (2E)-enoyl-[ACP] + H2O. Involved in unsaturated fatty acids biosynthesis. Catalyzes the dehydration of short chain beta-hydroxyacyl-ACPs and long chain saturated and unsaturated beta-hydroxyacyl-ACPs. The chain is 3-hydroxyacyl-[acyl-carrier-protein] dehydratase FabZ from Jannaschia sp. (strain CCS1).